Consider the following 448-residue polypeptide: tRNA modification GTPase MnmE (448 aa).

Positions 24, 81, and 120 each coordinate (6S)-5-formyl-5,6,7,8-tetrahydrofolate. The TrmE-type G domain maps to 216-373; it reads GLNVVLVGAP…LKRTLLREAG (158 aa). Residue Asn226 coordinates K(+). GTP contacts are provided by residues 226-231, 245-251, and 270-273; these read NVGKSS, TDIAGTT, and DTAG. Ser230 serves as a coordination point for Mg(2+). Residues Thr245, Ile247, and Thr250 each contribute to the K(+) site. A Mg(2+)-binding site is contributed by Thr251. Lys448 is a binding site for (6S)-5-formyl-5,6,7,8-tetrahydrofolate.

This sequence belongs to the TRAFAC class TrmE-Era-EngA-EngB-Septin-like GTPase superfamily. TrmE GTPase family. Homodimer. Heterotetramer of two MnmE and two MnmG subunits. K(+) is required as a cofactor.

Its subcellular location is the cytoplasm. Functionally, exhibits a very high intrinsic GTPase hydrolysis rate. Involved in the addition of a carboxymethylaminomethyl (cmnm) group at the wobble position (U34) of certain tRNAs, forming tRNA-cmnm(5)s(2)U34. The chain is tRNA modification GTPase MnmE from Neisseria meningitidis serogroup C (strain 053442).